We begin with the raw amino-acid sequence, 279 residues long: NLP effector protein 9 (279 aa).

The first 19 residues, 1–19, serve as a signal peptide directing secretion; sequence MKISNLLGVLVVFLAVVKG. The Conserved undecapeptide motif motif lies at 151–161; sequence AIMYAWYFPDI. An N-linked (GlcNAc...) asparagine glycan is attached at asparagine 176.

The protein belongs to the Necrosis inducing protein (NPP1) family.

It is found in the secreted. Secreted effector that acts as a pathogen-associated molecular pattern (PAMP) recognized by the plant immune system. Seems not to induce necrosis in Nicotiana benthamiana leaves. The chain is NLP effector protein 9 from Plasmopara viticola (Downy mildew of grapevine).